The sequence spans 314 residues: DNA-directed RNA polymerase subunit alpha (314 aa).

Residues 1-228 (MIEFEKPNIH…EHLGLFMDIS (228 aa)) are alpha N-terminal domain (alpha-NTD). Residues 242 to 314 (PVAASASDSA…DMNLGFRKED (73 aa)) form an alpha C-terminal domain (alpha-CTD) region.

Belongs to the RNA polymerase alpha chain family. Homodimer. The RNAP catalytic core consists of 2 alpha, 1 beta, 1 beta' and 1 omega subunit. When a sigma factor is associated with the core the holoenzyme is formed, which can initiate transcription.

It catalyses the reaction RNA(n) + a ribonucleoside 5'-triphosphate = RNA(n+1) + diphosphate. DNA-dependent RNA polymerase catalyzes the transcription of DNA into RNA using the four ribonucleoside triphosphates as substrates. The chain is DNA-directed RNA polymerase subunit alpha from Leuconostoc mesenteroides subsp. mesenteroides (strain ATCC 8293 / DSM 20343 / BCRC 11652 / CCM 1803 / JCM 6124 / NCDO 523 / NBRC 100496 / NCIMB 8023 / NCTC 12954 / NRRL B-1118 / 37Y).